Consider the following 234-residue polypeptide: Large ribosomal subunit protein uL1 (234 aa).

The protein belongs to the universal ribosomal protein uL1 family. Part of the 50S ribosomal subunit.

Functionally, binds directly to 23S rRNA. The L1 stalk is quite mobile in the ribosome, and is involved in E site tRNA release. In terms of biological role, protein L1 is also a translational repressor protein, it controls the translation of the L11 operon by binding to its mRNA. The chain is Large ribosomal subunit protein uL1 from Vibrio atlanticus (strain LGP32) (Vibrio splendidus (strain Mel32)).